A 512-amino-acid chain; its full sequence is Probable cytochrome P450 6d2 (512 aa).

C457 provides a ligand contact to heme.

The protein belongs to the cytochrome P450 family. It depends on heme as a cofactor.

Its subcellular location is the endoplasmic reticulum membrane. The protein localises to the microsome membrane. Functionally, may be involved in the metabolism of insect hormones and in the breakdown of synthetic insecticides. The polypeptide is Probable cytochrome P450 6d2 (Cyp6d2) (Drosophila melanogaster (Fruit fly)).